The following is a 286-amino-acid chain: MFAEQQREYLDKGYTKIESFFSAEEVAKILEDVKQIELGAIGVASDNETYQFEKKNGETTKLLRRVENPHLYFDAIDSLVRSEKIVDLLRHFLGENIRLHNSKINFKPPSGAPVQWHQDWAFYPHTNDDFLTLGIFLDETSEKNGAMACLPGSHKGKVYDHRNVETGEFCHAISRSNWDEALDPTEGELLTGPVGTVTLHHVRTLHGSGPNHSTIRRRFLLIGYAAADAWPLLGCGNYGDYESLMVSGRSTVFPRMVELPLTVPYPLSMYGDRIFESQRALTQKYY.

The protein belongs to the PhyH family.

Functionally, required for hypophosphite oxidation. The chain is Probable alpha-ketoglutarate-dependent hypophosphite dioxygenase (htxA) from Stutzerimonas stutzeri (Pseudomonas stutzeri).